The primary structure comprises 302 residues: D-alanine--D-alanine ligase (302 aa).

The region spanning 100–294 is the ATP-grasp domain; that stretch reads KALFRREGLL…FPELVEKLIQ (195 aa). 127 to 180 contributes to the ATP binding site; that stretch reads GLNYPIFVKSNIGGSSVNVHLVTNYEELFIAMEALFNAGEEVLLEEAIIGQEVT. Mg(2+) contacts are provided by Asp248, Glu261, and Asn263.

Belongs to the D-alanine--D-alanine ligase family. Mg(2+) serves as cofactor. Requires Mn(2+) as cofactor.

It is found in the cytoplasm. The enzyme catalyses 2 D-alanine + ATP = D-alanyl-D-alanine + ADP + phosphate + H(+). The protein operates within cell wall biogenesis; peptidoglycan biosynthesis. Cell wall formation. This Lawsonia intracellularis (strain PHE/MN1-00) protein is D-alanine--D-alanine ligase.